Here is a 187-residue protein sequence, read N- to C-terminus: GTP cyclohydrolase 1 (187 aa).

Residues Cys76, His79, and Cys148 each contribute to the Zn(2+) site.

This sequence belongs to the GTP cyclohydrolase I family. As to quaternary structure, toroid-shaped homodecamer, composed of two pentamers of five dimers.

The catalysed reaction is GTP + H2O = 7,8-dihydroneopterin 3'-triphosphate + formate + H(+). It participates in cofactor biosynthesis; 7,8-dihydroneopterin triphosphate biosynthesis; 7,8-dihydroneopterin triphosphate from GTP: step 1/1. This Streptococcus thermophilus (strain CNRZ 1066) protein is GTP cyclohydrolase 1.